We begin with the raw amino-acid sequence, 344 residues long: Methionine import ATP-binding protein MetN 1 (344 aa).

An ABC transporter domain is found at isoleucine 2–isoleucine 241. Residue glycine 38–serine 45 coordinates ATP.

It belongs to the ABC transporter superfamily. Methionine importer (TC 3.A.1.24) family. The complex is composed of two ATP-binding proteins (MetN), two transmembrane proteins (MetI) and a solute-binding protein (MetQ).

The protein resides in the cell inner membrane. The catalysed reaction is L-methionine(out) + ATP + H2O = L-methionine(in) + ADP + phosphate + H(+). It catalyses the reaction D-methionine(out) + ATP + H2O = D-methionine(in) + ADP + phosphate + H(+). Functionally, part of the ABC transporter complex MetNIQ involved in methionine import. Responsible for energy coupling to the transport system. This Burkholderia lata (strain ATCC 17760 / DSM 23089 / LMG 22485 / NCIMB 9086 / R18194 / 383) protein is Methionine import ATP-binding protein MetN 1.